Consider the following 115-residue polypeptide: Large ribosomal subunit protein bL20c (115 aa).

Belongs to the bacterial ribosomal protein bL20 family.

It localises to the plastid. The protein resides in the chloroplast. In terms of biological role, binds directly to 23S ribosomal RNA and is necessary for the in vitro assembly process of the 50S ribosomal subunit. It is not involved in the protein synthesizing functions of that subunit. The protein is Large ribosomal subunit protein bL20c of Chaetosphaeridium globosum (Charophycean green alga).